The chain runs to 289 residues: Syntaxin-3 (289 aa).

The Cytoplasmic segment spans residues 1-263 (MKDRLEQLKA…MKYQGQARKK (263 aa)). The stretch at 32–111 (MDEFFSEIEE…IEEDEVRSSA (80 aa)) forms a coiled coil. The t-SNARE coiled-coil homology domain maps to 191 to 253 (LSEIEGRHKD…EKARDETKRA (63 aa)). The chain crosses the membrane as a helical; Anchor for type IV membrane protein span at residues 264–284 (LIIIIVIVVVLLGILALIIGL). The Extracellular portion of the chain corresponds to 285–289 (SVGLK).

Belongs to the syntaxin family. As to quaternary structure, interacts with REEP6. Interacts with PRPH2 in rod and cone photoreceptors. Interacts with ROM1. Interacts with SNAP25. Interacts with VAMP2. In terms of tissue distribution, heart, spleen, lung and kidney.

The protein localises to the membrane. Potentially involved in docking of synaptic vesicles at presynaptic active zones. Apical receptor involved in membrane fusion of apical vesicles. Essential for survival of retinal photoreceetors. This chain is Syntaxin-3 (Stx3), found in Rattus norvegicus (Rat).